Reading from the N-terminus, the 2057-residue chain is MKSAWLALKSKSALHPKSEYPVSNIHYPKAANYRQTRNYLEIAAKMSEEVDRNDPELKYLSVERNQFNPIRPRRPSGHRSVLVWVPHENQGFVAASIKREHGDEVEVELAETGKRVMILRDDIQKMNPPKFDKVEDMAELTCLNEASVLHNIKDRYYSGLIYTYSGLFCVVVNPYKKLPIYTEKIMERYKGIKRHEVPPHVFAITDSAYRNMLGDREDQSILCTGESGAGKTENTKKVIQFLAYVAASKPKGSGAVPHPAVLINFSVNTNKYIKVKIMAQNQNQTIEVVNGLKMVEVNSNCQEGELEQQLLQANPILEAFGNAKTVKNDNSSRFGKFIRINFDASGFISGANIETYLLEKSRAIRQAKDERTFHIFYQLLAGATPEQREKFILDDVKSYAFLSNGSLPVPGVDDYAEFQATVKSMNIMGMTSEDFNSIFRIVSAVLLFGSMKFRQERNNDQATLPDNTVAQKIAHLLGLSVTDMTRAFLTPRIKVGRDFVTKAQTKEQVEFAVEAIAKACYERMFKWLVNRINRSLDRTKRQGASFIGILDMAGFEIFELNSFEQLCINYTNEKLQQLFNHTMFILEQEEYQREGIEWKFIDFGLDLQPTIDLIDKPGGIMALLDEECWFPKATDKTFVDKLVSAHSMHPKFMKTDFRGVADFAIVHYAGRVDYSAAKWLMKNMDPLNENIVSLLQGSQDPFVVNIWKDAEIVGMAQQALTDTQFGARTRKGMFRTVSHLYKEQLAKLMDTLRNTNPNFVRCIIPNHEKRAGKIDAPLVLDQLRCNGVLEGIRICRQGFPNRIPFQEFRQRYELLTPNVIPKGFMDGKKACEKMIQALELDSNLYRVGQSKIFFRAGVLAHLEEERDFKISDLIVNFQAFCRGFLARRNYQKRLQQLNAIRIIQRNCAAYLKLRNWQWWRLYTKVKPLLEVTKQEEKLVQKEDELKQVREKLDTLAKNTQEYERKYQQALVEKTTLAEQLQAEIELCAEAEESRSRLMARKQELEDMMQELETRIEEEEERVLALGGEKKKLELNIQDLEEQLEEEEAARQKLQLEKVQLDAKIKKYEEDLALTDDQNQKLLKEKKLLEERANDLSQTLAEEEEKAKHLAKLKAKHEATITELEERLHKDQQQRQESDRSKRKIETEVADLKEQLNERRVQVDEMQAQLAKREEELTQTLLRIDEESATKATAQKAQRELESQLAEIQEDLEAEKAARAKAEKVRRDLSEELEALKNELLDSLDTTAAQQELRSKREQELATLKKSLEEETVNHEGVLADMRHKHSQELNSINDQLENLRKAKTVLEKAKGTLEAENADLATELRSVNSSRQENDRRRKQAESQIAELQVKLAEIERARSELQEKCTKLQQEAENITNQLEEAELKASAAVKSASNMESQLTEAQQLLEEETRQKLGLSSKLRQIESEKEALQEQLEEDDEAKRNYERKLAEVTTQMQEIKKKAEEDADLAKELEEGKKRLNKDIEALERQVKELIAQNDRLDKSKKKIQSELEDATIELEAQRTKVLELEKKQKNFDKILAEEKAISEQIAQERDTAEREAREKETKVLSVSRELDEAFDKIEDLENKRKTLQNELDDLANTQGTADKNVHELEKAKRALESQLAELKAQNEELEDDLQLTEDAKLRLEVNMQALRSQFERDLLAKEEGAEEKRRGLVKQLRDLETELDEERKQRTAAVASKKKLEGDLKEIETTMEMHNKVKEDALKHAKKLQAQVKDALRDAEEAKAAKEELQALSKEADGKVKALEAEVLQLTEDLASSERARRAAETERDELAEEIANNANKGSLMIDEKRRLEARIATLEEELEEEQSNSEVLLDRSRKAQLQIEQLTTELANEKSNSQKNENGRALLERQNKELKAKLAEIETAQRTKVKATIATLEAKIANLEEQLENEGKERLLQQKANRKMDKKIKELTMNIEDERRHVDQHKEQMDKLNSRIKLLKRNLDETEEELQKEKTQKRKYQRECEDMIESQEAMNREINSLKTKLRRTGGIGLSSSRLTGTPSSKRAGGGGGSDDSSVQDESLDGEDSAN.

The 51-residue stretch at 78-128 (HRSVLVWVPHENQGFVAASIKREHGDEVEVELAETGKRVMILRDDIQKMNP) folds into the Myosin N-terminal SH3-like domain. A Myosin motor domain is found at 132 to 867 (DKVEDMAELT…VLAHLEEERD (736 aa)). 225-232 (GESGAGKT) is an ATP binding site. Residues 250 to 260 (PKGSGAVPHPA) are 25 kDa/50 kDa junction. The tract at residues 722–734 (DTQFGARTRKGMF) is 50 kDa/20 kDa junction. The interval 745–767 (LAKLMDTLRNTNPNFVRCIIPNH) is actin-binding. The tract at residues 782–798 (QLRCNGVLEGIRICRQG) is reactive sulfhydryl/actin-binding. Residues 870–899 (ISDLIVNFQAFCRGFLARRNYQKRLQQLNA) form the IQ domain. A coiled-coil region spans residues 926-2016 (KPLLEVTKQE…SLKTKLRRTG (1091 aa)). Disordered regions lie at residues 1124 to 1144 (EERL…KRKI), 1782 to 1802 (SSER…EEIA), and 2008 to 2057 (LKTK…DSAN). The tract at residues 1343-2010 (SQIAELQVKL…MNREINSLKT (668 aa)) is alpha-helical tailpiece (LMM). Positions 1343–2057 (SQIAELQVKL…ESLDGEDSAN (715 aa)) are light meromyosin (LMM). Basic and acidic residues predominate over residues 1782–1792 (SSERARRAAET). The globular tailpiece stretch occupies residues 2011–2057 (KLRRTGGIGLSSSRLTGTPSSKRAGGGGGSDDSSVQDESLDGEDSAN). 2 positions are modified to phosphoserine: serine 2021 and serine 2022. Over residues 2044 to 2057 (SVQDESLDGEDSAN) the composition is skewed to acidic residues.

This sequence belongs to the TRAFAC class myosin-kinesin ATPase superfamily. Myosin family. Interacts with sau. Interacts with ck and Ubr3. In terms of processing, ubiquitinated. In terms of tissue distribution, in Johnston's organ, expressed in neurons and scolopale cells.

The protein resides in the cell projection. It is found in the cilium. It localises to the cytoplasm. Functionally, nonmuscle myosin appears to be responsible for cellularization. Required for morphogenesis and cytokinesis. Necessary for auditory transduction: plays a role in Johnston's organ organization by acting in scolopidial apical attachment. Interaction with the myosin ck may be important for this function. Localizes to and defines the trailing edge of cells during larval epidermal wound healing. This process is dependent on the phosphatidylinositol 4-phosphate 5-kinase sktl/skittles. This chain is Myosin heavy chain, non-muscle (zip), found in Drosophila melanogaster (Fruit fly).